A 480-amino-acid chain; its full sequence is Serralysin (480 aa).

His181 is a binding site for Zn(2+). Glu182 is a catalytic residue. Zn(2+) contacts are provided by His185 and His191. Ca(2+)-binding residues include Arg260, Asp263, Asp292, Gly294, Gly295, Asp297, Thr334, and Glu336. 2 Hemolysin-type calcium-binding repeats span residues 339–356 (IGGS…ANTL) and 357–374 (KGGA…ADNL).

This sequence belongs to the peptidase M10B family. Requires Zn(2+) as cofactor. The cofactor is Ca(2+).

Its subcellular location is the secreted. It carries out the reaction Preferential cleavage of bonds with hydrophobic residues in P1'.. This is Serralysin (prtA) from Photorhabdus laumondii subsp. laumondii (strain DSM 15139 / CIP 105565 / TT01) (Photorhabdus luminescens subsp. laumondii).